The chain runs to 440 residues: Xylose isomerase (440 aa).

Residues histidine 100 and aspartate 103 contribute to the active site. The Mg(2+) site is built by glutamate 231, glutamate 267, histidine 270, aspartate 295, aspartate 306, aspartate 308, and aspartate 338.

Belongs to the xylose isomerase family. In terms of assembly, homotetramer. The cofactor is Mg(2+).

The protein resides in the cytoplasm. The enzyme catalyses alpha-D-xylose = alpha-D-xylulofuranose. The polypeptide is Xylose isomerase (Burkholderia orbicola (strain MC0-3)).